A 319-amino-acid chain; its full sequence is Structure-specific endonuclease subunit SLX1 (319 aa).

The GIY-YIG domain maps to 20–103; it reads TFYCCYLLQS…QHGYKTHYIP (84 aa). An SLX1-type zinc finger spans residues 233-297; the sequence is CNLCGQCYDY…LPNFCMCPGC (65 aa).

The protein belongs to the SLX1 family. Forms a heterodimer with SLX4. A divalent metal cation is required as a cofactor.

The protein resides in the nucleus. Its function is as follows. Catalytic subunit of the SLX1-SLX4 structure-specific endonuclease that resolves DNA secondary structures generated during DNA repair and recombination. Has endonuclease activity towards branched DNA substrates, introducing single-strand cuts in duplex DNA close to junctions with ss-DNA. This Vanderwaltozyma polyspora (strain ATCC 22028 / DSM 70294 / BCRC 21397 / CBS 2163 / NBRC 10782 / NRRL Y-8283 / UCD 57-17) (Kluyveromyces polysporus) protein is Structure-specific endonuclease subunit SLX1.